The sequence spans 51 residues: Insulin (51 aa).

3 disulfides stabilise this stretch: Cys8-Cys37, Cys20-Cys50, and Cys36-Cys41.

Belongs to the insulin family. Heterodimer of a B chain and an A chain linked by two disulfide bonds.

It localises to the secreted. In terms of biological role, insulin decreases blood glucose concentration. It increases cell permeability to monosaccharides, amino acids and fatty acids. It accelerates glycolysis, the pentose phosphate cycle, and glycogen synthesis in liver. This Seriola quinqueradiata (Five-ray yellowtail) protein is Insulin.